Reading from the N-terminus, the 253-residue chain is Glucosamine-6-phosphate deaminase (253 aa).

D65 (proton acceptor; for enolization step) is an active-site residue. Residue N133 is the For ring-opening step of the active site. Catalysis depends on H135, which acts as the Proton acceptor; for ring-opening step. E140 functions as the For ring-opening step in the catalytic mechanism.

This sequence belongs to the glucosamine/galactosamine-6-phosphate isomerase family. NagB subfamily.

It catalyses the reaction alpha-D-glucosamine 6-phosphate + H2O = beta-D-fructose 6-phosphate + NH4(+). The protein operates within amino-sugar metabolism; N-acetylneuraminate degradation; D-fructose 6-phosphate from N-acetylneuraminate: step 5/5. Its function is as follows. Catalyzes the reversible isomerization-deamination of glucosamine 6-phosphate (GlcN6P) to form fructose 6-phosphate (Fru6P) and ammonium ion. This chain is Glucosamine-6-phosphate deaminase, found in Corynebacterium efficiens (strain DSM 44549 / YS-314 / AJ 12310 / JCM 11189 / NBRC 100395).